Reading from the N-terminus, the 262-residue chain is Merozoite surface protein 2 (262 aa).

The N-terminal stretch at 1-20 (MKVIKTLSIINFFIFVTFNI) is a signal peptide. N-linked (GlcNAc...) asparagine glycosylation is found at N22 and N36. A polymorphic region region spans residues 44-188 (AESKPPTGTG…EQTESPELQS (145 aa)). Residues 44 to 223 (AESKPPTGTG…DSQKECTDGN (180 aa)) form a disordered region. Gly residues predominate over residues 51–66 (GTGGSGSAGSGAGASA). Positions 67-111 (GNGANPGADAERSPSTPATPATPATTTTTTTTNDAEASTSTSSEN) are enriched in low complexity. The segment covering 112-127 (PNHKNAETNPKGKGEV) has biased composition (basic and acidic residues). Polar residues-rich tracts occupy residues 129–155 (KPNQ…NVPP) and 162–190 (KSPT…QSAP). N139 carries an N-linked (GlcNAc...) asparagine glycan. The N-linked (GlcNAc...) asparagine glycan is linked to N211. The cysteines at positions 219 and 227 are disulfide-linked. N-linked (GlcNAc...) asparagine glycosylation is found at N235 and N236. The GPI-anchor amidated asparagine moiety is linked to residue N236. The propeptide at 237-262 (SSNIASINKFVVLISATLVLSFAIFI) is removed in mature form.

Its subcellular location is the cell membrane. In terms of biological role, may play a role in the merozoite attachment to the erythrocyte. In Plasmodium falciparum (isolate Camp / Malaysia), this protein is Merozoite surface protein 2.